Here is a 179-residue protein sequence, read N- to C-terminus: Large ribosomal subunit protein uL5 (179 aa).

It belongs to the universal ribosomal protein uL5 family. In terms of assembly, part of the 50S ribosomal subunit; part of the 5S rRNA/L5/L18/L25 subcomplex. Contacts the 5S rRNA and the P site tRNA. Forms a bridge to the 30S subunit in the 70S ribosome.

Its function is as follows. This is one of the proteins that bind and probably mediate the attachment of the 5S RNA into the large ribosomal subunit, where it forms part of the central protuberance. In the 70S ribosome it contacts protein S13 of the 30S subunit (bridge B1b), connecting the 2 subunits; this bridge is implicated in subunit movement. Contacts the P site tRNA; the 5S rRNA and some of its associated proteins might help stabilize positioning of ribosome-bound tRNAs. This Dictyoglomus thermophilum (strain ATCC 35947 / DSM 3960 / H-6-12) protein is Large ribosomal subunit protein uL5.